We begin with the raw amino-acid sequence, 811 residues long: MAGSGSWDGSQSDNSSQFEPGIDNIYEAFICPLTKQVMHNPVTLENGQTFEREAIEKWFQECRENGQPLSCPITSKELSITDLSPSIALRNTIEEWRARNDALKLDIARQSLYLGNAETNILLALKNVREICRNIRKIRQRVCNPQLVRLITDMLKSSSHEVRCKALQTLQVVVEGDEESKAIVAEGDTVRTIVKFLSQEPSKGREAAVSVLFELSKSEALCEKIGSIHGAIILLVGLTSSKSENVSTVEKADKTLTNLERSEENVRQMAINGRLQPLLAKLLEGSPETKVSMAFYLGVLALNNDVKVIVAQTVGSSLIDLMRTRDMSQREAALGALNNISSFEGSAKLLINTGILPPLIKDLFYVGPNQLPIRLKEVSATILANIVNIGYDFDKVPVGPHHQTLVSEEIVENLLQLTSNTGPEIQGKLLAVLVGLTSCPNSVINVVSAIRNSAAIISLVQFVEIHENDDLRLASIKLLHNISPHMSEELANALRSTVGQLGSLVSIISENTPTITEEQAAAAGLLAELPERDLVLTMRLLREGAFEKIISKIVGIRQGEIRGIRFERTFLEGLVSILARITFALTKETDATLFCCEKNLPSLFLDLLQSNSQDNIQRASATALENLSLESKNLTKIPELPPPTYCVSIFSCLSKPPVVLGICKIHQGICSVRESFCLVEGQAVDKLVDLLDHENDKVVGPALAALSTLLEDGLDVVQGVRLIDEADGITPILNVLLENRTENLRIRAVWMVERILRIEEIAREVGEEQNVTAALVDAFQNADFRTRQIAEKALRHIDKIPNFSGIFTNIG.

Residues 24 to 103 enclose the U-box domain; the sequence is NIYEAFICPL…EEWRARNDAL (80 aa). ARM repeat units lie at residues 136 to 175, 178 to 217, 220 to 261, 263 to 302, 303 to 342, 344 to 388, 399 to 438, 444 to 484, and 489 to 528; these read RKIR…VVVE, EESK…ELSK, ALCE…NLER, EENV…VLAL, NNDV…NISS, EGSA…NIVN, GPHH…GLTS, INVV…NISP, and ELAN…LLAE.

It carries out the reaction S-ubiquitinyl-[E2 ubiquitin-conjugating enzyme]-L-cysteine + [acceptor protein]-L-lysine = [E2 ubiquitin-conjugating enzyme]-L-cysteine + N(6)-ubiquitinyl-[acceptor protein]-L-lysine.. The protein operates within protein modification; protein ubiquitination. Its function is as follows. Functions as an E3 ubiquitin ligase. The chain is U-box domain-containing protein 43 (PUB43) from Arabidopsis thaliana (Mouse-ear cress).